A 627-amino-acid polypeptide reads, in one-letter code: MPSTAEKQRRILPFFQFTSLSTKDKFGILVQRDPRLAGLGVLGRGVLFSCFHEEHLKEATQLYEVLIECESFEEFLDLCHQAREYVNEGLYVYAVSVAILHRQDCRGVSLPPVQEVFPDKFVPSETLFKAFKEVRLHPDDEEIIVDIEKTGNVKDPEYNLAYYREDIGVNAHHWHWHLVYPATWRPEVVHRIKDRKGELFFYMHQQMCARYDSERLSNGMAPMVPFHNFHEPMEGYSSHLSSGINGMPYAFRPHGRILKDMREVSVQDLERSRERLLDAINLGYVVDPNGLETPLDELHGIDILGAIVESSNDSVNKSYYGSLHNWGHVIMSAVDDPDGRYQLNPGVMSDTATSLRDPIFYRWHRFIDDMFQEYKKSLTPYSSQLQFKGVIVKSVCVRAKTADVVETTFANALLDISHAFNFGRTGPVKVRYNHLTHEPFTYKIVVDNAGTKTRKATVRIFLGPEHDNLGNEFDIGRLRRLMIELDKFTTVLEPGENVIERDSIDSSVTIREQYTYRQLQDGRSNREQTEYCSCGWPNDLLVPKGNEHGMKFRLFVMLTDAVQGQVGDHGATGLCTDAVSYCGAKDQLYPDRYPMGFPFDRDIKADSIPEWLHPNMHFSEVTITHHQ.

The Cu cation site is built by His173, His177, and His204. N-linked (GlcNAc...) asparagine glycosylation is found at Asn312 and Asn316. Cu cation-binding residues include His324, His328, and His364. Cysteines 534 and 582 form a disulfide.

The protein belongs to the tyrosinase family. Hemocyanin subfamily. As to quaternary structure, tarantula hemocyanin is a 24-chain polymer with seven different chains identified. In terms of tissue distribution, hemolymph.

Its subcellular location is the secreted. It is found in the extracellular space. Functionally, hemocyanins are copper-containing oxygen carriers occurring freely dissolved in the hemolymph of many mollusks and arthropods. This chain is Hemocyanin B chain (HCB), found in Aphonopelma sp. (American tarantula).